Here is a 188-residue protein sequence, read N- to C-terminus: Casparian strip membrane protein 1 (188 aa).

Residues 1-24 (MKAGALELGHASKTTKSGVNRGMS) lie on the Cytoplasmic side of the membrane. The helical transmembrane segment at 25-45 (ILDLFIRIIAIIATLGSAIAM) threads the bilayer. The Extracellular segment spans residues 46-72 (GTTNETLPFFTQFVRFKAKYSDLPTFT). Residue asparagine 49 is glycosylated (N-linked (GlcNAc...) asparagine). Residues 73 to 93 (FFVVANAIVSAYLVLSLGLSI) traverse the membrane as a helical segment. The Cytoplasmic segment spans residues 94-105 (YHIMRSRAQATR). The chain crosses the membrane as a helical span at residues 106–126 (IALIFFDAAMLGLLTGGASAS). The Extracellular portion of the chain corresponds to 127 to 159 (AAIVYLAHKGNRKTNWFPICQQYDSFCHRTSGS). Residues 160–180 (LVGSFAGSVLIILLIFLSAIA) traverse the membrane as a helical segment. Over 181–188 (LSRQSLNH) the chain is Cytoplasmic.

Belongs to the Casparian strip membrane proteins (CASP) family. Homodimer and heterodimers.

The protein localises to the cell membrane. Regulates membrane-cell wall junctions and localized cell wall deposition. Required for establishment of the Casparian strip membrane domain (CSD) and the subsequent formation of Casparian strips, a cell wall modification of the root endodermis that determines an apoplastic barrier between the intraorganismal apoplasm and the extraorganismal apoplasm and prevents lateral diffusion. The polypeptide is Casparian strip membrane protein 1 (Solanum tuberosum (Potato)).